A 719-amino-acid chain; its full sequence is Polyribonucleotide nucleotidyltransferase (719 aa).

Mg(2+)-binding residues include D495 and D501. Positions 562–621 (PRRLSFRIDPELIGTVIGPGGRTIKGITERTNTKIDIEDTGIVTVASHDGAAAEEAQKII) constitute a KH domain. The 69-residue stretch at 631-699 (GEYFDGKVTR…NRGRINLTLR (69 aa)) folds into the S1 motif domain. Residues 699 to 719 (RGVPQDGSDPQPTVILPIGES) are disordered.

This sequence belongs to the polyribonucleotide nucleotidyltransferase family. Mg(2+) is required as a cofactor.

The protein localises to the cytoplasm. It catalyses the reaction RNA(n+1) + phosphate = RNA(n) + a ribonucleoside 5'-diphosphate. Its function is as follows. Involved in mRNA degradation. Catalyzes the phosphorolysis of single-stranded polyribonucleotides processively in the 3'- to 5'-direction. This is Polyribonucleotide nucleotidyltransferase from Synechococcus sp. (strain RCC307).